The sequence spans 555 residues: Coiled-coil domain-containing protein 102A (555 aa).

Disordered regions lie at residues M1–D68, L136–E202, and P214–A254. Phosphoserine occurs at positions 12, 26, and 28. Positions S37–P61 are enriched in pro residues. The stretch at R72–R161 forms a coiled coil. Composition is skewed to basic and acidic residues over residues L136–R159 and G166–E183. The span at R224–G236 shows a compositional bias: low complexity. Coiled coils occupy residues Q268–T401 and K432–P522. Residues E478–A555 form a disordered region. Positions E536 to A555 are enriched in acidic residues. S542 bears the Phosphoserine mark.

The chain is Coiled-coil domain-containing protein 102A (CCDC102A) from Bos taurus (Bovine).